Consider the following 258-residue polypeptide: 2-succinyl-6-hydroxy-2,4-cyclohexadiene-1-carboxylate synthase (258 aa).

This sequence belongs to the AB hydrolase superfamily. MenH family. As to quaternary structure, monomer.

The catalysed reaction is 5-enolpyruvoyl-6-hydroxy-2-succinyl-cyclohex-3-ene-1-carboxylate = (1R,6R)-6-hydroxy-2-succinyl-cyclohexa-2,4-diene-1-carboxylate + pyruvate. It participates in quinol/quinone metabolism; 1,4-dihydroxy-2-naphthoate biosynthesis; 1,4-dihydroxy-2-naphthoate from chorismate: step 3/7. It functions in the pathway quinol/quinone metabolism; menaquinone biosynthesis. Functionally, catalyzes a proton abstraction reaction that results in 2,5-elimination of pyruvate from 2-succinyl-5-enolpyruvyl-6-hydroxy-3-cyclohexene-1-carboxylate (SEPHCHC) and the formation of 2-succinyl-6-hydroxy-2,4-cyclohexadiene-1-carboxylate (SHCHC). The sequence is that of 2-succinyl-6-hydroxy-2,4-cyclohexadiene-1-carboxylate synthase from Enterobacter sp. (strain 638).